The chain runs to 336 residues: Large ribosomal subunit protein uL3 (336 aa).

Disordered stretches follow at residues Met-1–Ala-43, Ile-205–Gln-230, and Arg-311–Gly-336. A compositionally biased stretch (basic residues) spans Gly-219–Gln-230.

This sequence belongs to the universal ribosomal protein uL3 family. In terms of assembly, part of the 50S ribosomal subunit. Forms a cluster with proteins L14 and L24e.

Functionally, one of the primary rRNA binding proteins, it binds directly near the 3'-end of the 23S rRNA, where it nucleates assembly of the 50S subunit. This Natronomonas pharaonis (strain ATCC 35678 / DSM 2160 / CIP 103997 / JCM 8858 / NBRC 14720 / NCIMB 2260 / Gabara) (Halobacterium pharaonis) protein is Large ribosomal subunit protein uL3.